A 581-amino-acid chain; its full sequence is Oligo-1,6-glucosidase IMA5 (581 aa).

Aspartate 210 serves as the catalytic Nucleophile. Glutamate 272 (proton donor) is an active-site residue.

Belongs to the glycosyl hydrolase 13 family.

It carries out the reaction Hydrolysis of (1-&gt;6)-alpha-D-glucosidic linkages in some oligosaccharides produced from starch and glycogen by alpha-amylase, and in isomaltose.. Alpha-glucosidase with specificity for isomaltose, maltose, and palatinose. In Saccharomyces cerevisiae (strain ATCC 204508 / S288c) (Baker's yeast), this protein is Oligo-1,6-glucosidase IMA5 (IMA5).